We begin with the raw amino-acid sequence, 364 residues long: Protein IncC (364 aa).

3 stretches are compositionally biased toward basic and acidic residues: residues 1 to 10 (MGVIHEETAY), 26 to 42 (ADHRDSAGRLSRWEATG), and 89 to 100 (HRPEVGSGRQEK). Disordered stretches follow at residues 1–63 (MGVI…ASRV) and 75–102 (VRAGNGGSAGTSGVHRPEVGSGRQEKTG).

The protein belongs to the ParA family.

Functionally, this is one of the proteins encoded by the trfB operon; it is involved in plasmid maintenance and replication. In Escherichia coli, this protein is Protein IncC (incC).